The sequence spans 156 residues: Flagellar assembly factor FliW (156 aa).

It belongs to the FliW family. Interacts with translational regulator CsrA and flagellin(s).

The protein localises to the cytoplasm. Functionally, acts as an anti-CsrA protein, binds CsrA and prevents it from repressing translation of its target genes, one of which is flagellin. Binds to flagellin and participates in the assembly of the flagellum. The polypeptide is Flagellar assembly factor FliW (Pseudothermotoga lettingae (strain ATCC BAA-301 / DSM 14385 / NBRC 107922 / TMO) (Thermotoga lettingae)).